Reading from the N-terminus, the 85-residue chain is MAHKKAGGSTRNGRDSNAKRLGVKRFGGETVLAGSIIVRQRGTKFHAGNNVGCGRDHTLFATANGKVQFEVKGPNNRKYISIVAE.

The tract at residues 1 to 21 is disordered; sequence MAHKKAGGSTRNGRDSNAKRL.

It belongs to the bacterial ribosomal protein bL27 family.

The polypeptide is Large ribosomal subunit protein bL27 (Erwinia tasmaniensis (strain DSM 17950 / CFBP 7177 / CIP 109463 / NCPPB 4357 / Et1/99)).